The primary structure comprises 691 residues: Elongation factor G (691 aa).

The tr-type G domain occupies 8–283; it reads EDYRNFGIMA…AVVDFLPNPT (276 aa). GTP contacts are provided by residues 17 to 24, 81 to 85, and 135 to 138; these read AHIDAGKT, DTPGH, and NKMD.

This sequence belongs to the TRAFAC class translation factor GTPase superfamily. Classic translation factor GTPase family. EF-G/EF-2 subfamily.

It localises to the cytoplasm. Functionally, catalyzes the GTP-dependent ribosomal translocation step during translation elongation. During this step, the ribosome changes from the pre-translocational (PRE) to the post-translocational (POST) state as the newly formed A-site-bound peptidyl-tRNA and P-site-bound deacylated tRNA move to the P and E sites, respectively. Catalyzes the coordinated movement of the two tRNA molecules, the mRNA and conformational changes in the ribosome. The protein is Elongation factor G of Maricaulis maris (strain MCS10) (Caulobacter maris).